The following is a 238-amino-acid chain: MNPLLEIAEVSVGQHYYWELGGYELHGQVLITSWVVLGILAVLSFLGNTNLKSTPDGFQNFTELVTEFIRDLAKTQIGEEDYLKWVPFLGTIFLFIFVSNWSGALLPYRLIEIPNGELAAPTNDINTTVALALLTSISYFYAGISKKGLGYFSRYVEPAAFLLPINVLEDFTKPLSLSFRLFGNILADELVVGVLVALVPLIIPIPIMLLGVFTSAIQALVFATLAGAYINEALADHH.

The next 5 membrane-spanning stretches (helical) occupy residues 27 to 47, 86 to 106, 125 to 145, 190 to 210, and 211 to 231; these read GQVLITSWVVLGILAVLSFLG, VPFLGTIFLFIFVSNWSGALL, INTTVALALLTSISYFYAGIS, LVVGVLVALVPLIIPIPIMLL, and GVFTSAIQALVFATLAGAYIN.

This sequence belongs to the ATPase A chain family. In terms of assembly, F-type ATPases have 2 components, F(1) - the catalytic core - and F(0) - the membrane proton channel. F(1) has five subunits: alpha(3), beta(3), gamma(1), delta(1), epsilon(1). F(0) has four main subunits: a(1), b(1), b'(1) and c(10-14). The alpha and beta chains form an alternating ring which encloses part of the gamma chain. F(1) is attached to F(0) by a central stalk formed by the gamma and epsilon chains, while a peripheral stalk is formed by the delta, b and b' chains.

The protein resides in the plastid. It localises to the chloroplast thylakoid membrane. In terms of biological role, f(1)F(0) ATP synthase produces ATP from ADP in the presence of a proton or sodium gradient. F-type ATPases consist of two structural domains, F(1) containing the extramembraneous catalytic core and F(0) containing the membrane proton channel, linked together by a central stalk and a peripheral stalk. During catalysis, ATP synthesis in the catalytic domain of F(1) is coupled via a rotary mechanism of the central stalk subunits to proton translocation. The protein is ATP synthase subunit a, chloroplastic of Chlamydomonas reinhardtii (Chlamydomonas smithii).